A 154-amino-acid chain; its full sequence is 6,7-dimethyl-8-ribityllumazine synthase (154 aa).

5-amino-6-(D-ribitylamino)uracil-binding positions include phenylalanine 22, 56–58 (AFE), and 80–82 (AVI). 85–86 (AT) contributes to the (2S)-2-hydroxy-3-oxobutyl phosphate binding site. Histidine 88 (proton donor) is an active-site residue. 5-amino-6-(D-ribitylamino)uracil is bound at residue phenylalanine 113. Arginine 127 is a (2S)-2-hydroxy-3-oxobutyl phosphate binding site.

Belongs to the DMRL synthase family.

It carries out the reaction (2S)-2-hydroxy-3-oxobutyl phosphate + 5-amino-6-(D-ribitylamino)uracil = 6,7-dimethyl-8-(1-D-ribityl)lumazine + phosphate + 2 H2O + H(+). The protein operates within cofactor biosynthesis; riboflavin biosynthesis; riboflavin from 2-hydroxy-3-oxobutyl phosphate and 5-amino-6-(D-ribitylamino)uracil: step 1/2. Catalyzes the formation of 6,7-dimethyl-8-ribityllumazine by condensation of 5-amino-6-(D-ribitylamino)uracil with 3,4-dihydroxy-2-butanone 4-phosphate. This is the penultimate step in the biosynthesis of riboflavin. In Clostridium botulinum (strain Okra / Type B1), this protein is 6,7-dimethyl-8-ribityllumazine synthase.